Reading from the N-terminus, the 1643-residue chain is DNA-directed RNA polymerase subunit beta' (1643 aa).

Residues C64, C66, C79, and C82 each coordinate Zn(2+). Mg(2+) contacts are provided by D684, D686, and D688. Residues C1046, C1239, C1246, and C1249 each coordinate Zn(2+).

The protein belongs to the RNA polymerase beta' chain family. The RNAP catalytic core consists of 2 alpha, 1 beta, 1 beta' and 1 omega subunit. When a sigma factor is associated with the core the holoenzyme is formed, which can initiate transcription. Requires Mg(2+) as cofactor. Zn(2+) serves as cofactor.

It carries out the reaction RNA(n) + a ribonucleoside 5'-triphosphate = RNA(n+1) + diphosphate. Its function is as follows. DNA-dependent RNA polymerase catalyzes the transcription of DNA into RNA using the four ribonucleoside triphosphates as substrates. In Petrotoga mobilis (strain DSM 10674 / SJ95), this protein is DNA-directed RNA polymerase subunit beta'.